A 119-amino-acid chain; its full sequence is Large ribosomal subunit protein uL22 (119 aa).

Belongs to the universal ribosomal protein uL22 family. Part of the 50S ribosomal subunit.

Its function is as follows. This protein binds specifically to 23S rRNA; its binding is stimulated by other ribosomal proteins, e.g. L4, L17, and L20. It is important during the early stages of 50S assembly. It makes multiple contacts with different domains of the 23S rRNA in the assembled 50S subunit and ribosome. In terms of biological role, the globular domain of the protein is located near the polypeptide exit tunnel on the outside of the subunit, while an extended beta-hairpin is found that lines the wall of the exit tunnel in the center of the 70S ribosome. The protein is Large ribosomal subunit protein uL22 of Trichodesmium erythraeum (strain IMS101).